A 316-amino-acid polypeptide reads, in one-letter code: GTP cyclohydrolase FolE2 2 (316 aa).

The protein belongs to the GTP cyclohydrolase IV family.

The catalysed reaction is GTP + H2O = 7,8-dihydroneopterin 3'-triphosphate + formate + H(+). Its pathway is cofactor biosynthesis; 7,8-dihydroneopterin triphosphate biosynthesis; 7,8-dihydroneopterin triphosphate from GTP: step 1/1. Converts GTP to 7,8-dihydroneopterin triphosphate. This Burkholderia orbicola (strain MC0-3) protein is GTP cyclohydrolase FolE2 2.